A 117-amino-acid chain; its full sequence is Hydrogenase maturation factor HypA (117 aa).

Position 2 (H2) interacts with Ni(2+). The Zn(2+) site is built by C73, C76, C89, and C92.

Belongs to the HypA/HybF family.

In terms of biological role, involved in the maturation of [NiFe] hydrogenases. Required for nickel insertion into the metal center of the hydrogenase. This Shewanella baltica (strain OS223) protein is Hydrogenase maturation factor HypA.